Reading from the N-terminus, the 467-residue chain is UDP-N-acetylmuramate--L-alanine ligase (467 aa).

114-120 contacts ATP; the sequence is GTHGKTT.

This sequence belongs to the MurCDEF family.

It localises to the cytoplasm. The catalysed reaction is UDP-N-acetyl-alpha-D-muramate + L-alanine + ATP = UDP-N-acetyl-alpha-D-muramoyl-L-alanine + ADP + phosphate + H(+). It participates in cell wall biogenesis; peptidoglycan biosynthesis. In terms of biological role, cell wall formation. The sequence is that of UDP-N-acetylmuramate--L-alanine ligase from Rhodopseudomonas palustris (strain BisB18).